We begin with the raw amino-acid sequence, 353 residues long: Dihydroorotate dehydrogenase (quinone) (353 aa).

Residues 66–70 (AGFDK) and Thr-90 contribute to the FMN site. Lys-70 lines the substrate pocket. Residue 115–119 (NRMGF) participates in substrate binding. FMN-binding residues include Asn-143 and Asn-176. Position 176 (Asn-176) interacts with substrate. The Nucleophile role is filled by Ser-179. Asn-181 provides a ligand contact to substrate. 2 residues coordinate FMN: Lys-212 and Thr-240. Residue 241 to 242 (NT) coordinates substrate. FMN is bound by residues Gly-264, Gly-293, and 314–315 (YT).

This sequence belongs to the dihydroorotate dehydrogenase family. Type 2 subfamily. As to quaternary structure, monomer. The cofactor is FMN.

Its subcellular location is the cell membrane. The enzyme catalyses (S)-dihydroorotate + a quinone = orotate + a quinol. It participates in pyrimidine metabolism; UMP biosynthesis via de novo pathway; orotate from (S)-dihydroorotate (quinone route): step 1/1. Catalyzes the conversion of dihydroorotate to orotate with quinone as electron acceptor. This Mycolicibacterium gilvum (strain PYR-GCK) (Mycobacterium gilvum (strain PYR-GCK)) protein is Dihydroorotate dehydrogenase (quinone).